The following is a 136-amino-acid chain: Autophagy-related protein 41 (136 aa).

The ATG9-binding stretch occupies residues 127–136; the sequence is QNYRLWLSSV.

Interacts with ATG9.

The protein resides in the preautophagosomal structure membrane. Its function is as follows. Involved in both selective and non-selective autophagy. Does not appear to play a role in determining the size of autophagosomes, but rather influences their formation rate. With ATG9, plays a role in the delivery of donor membrane to expanding phagophore. This Saccharomyces cerevisiae (strain ATCC 204508 / S288c) (Baker's yeast) protein is Autophagy-related protein 41.